Here is a 180-residue protein sequence, read N- to C-terminus: uncharacterized protein (180 aa).

The next 2 helical transmembrane spans lie at 37–59 (VLHA…FPSF) and 128–147 (AGSA…VLFV).

The protein localises to the cell membrane. This is an uncharacterized protein from Treponema pallidum (strain Nichols).